A 263-amino-acid polypeptide reads, in one-letter code: GTP cyclohydrolase 1 type 2 homolog (263 aa).

A divalent metal cation is bound by residues His65, His66, Asp104, His225, and Glu229.

This sequence belongs to the GTP cyclohydrolase I type 2/NIF3 family. In terms of assembly, homohexamer.

The chain is GTP cyclohydrolase 1 type 2 homolog from Nostoc sp. (strain PCC 7120 / SAG 25.82 / UTEX 2576).